We begin with the raw amino-acid sequence, 776 residues long: Glutathione biosynthesis bifunctional protein GshAB (776 aa).

The interval methionine 1–isoleucine 354 is glutamate--cysteine ligase. One can recognise an ATP-grasp domain in the interval lysine 521–phenylalanine 775. Position 548–606 (serine 548–arginine 606) interacts with ATP. The Mg(2+) site is built by aspartate 728, glutamate 745, and asparagine 747. 3 residues coordinate Mn(2+): aspartate 728, glutamate 745, and asparagine 747.

It in the N-terminal section; belongs to the glutamate--cysteine ligase type 1 family. Type 2 subfamily. As to quaternary structure, monomer. Mg(2+) is required as a cofactor. Requires Mn(2+) as cofactor.

It catalyses the reaction L-cysteine + L-glutamate + ATP = gamma-L-glutamyl-L-cysteine + ADP + phosphate + H(+). The catalysed reaction is gamma-L-glutamyl-L-cysteine + glycine + ATP = glutathione + ADP + phosphate + H(+). Its pathway is sulfur metabolism; glutathione biosynthesis; glutathione from L-cysteine and L-glutamate: step 1/2. It participates in sulfur metabolism; glutathione biosynthesis; glutathione from L-cysteine and L-glutamate: step 2/2. Functionally, synthesizes glutathione from L-glutamate and L-cysteine via gamma-L-glutamyl-L-cysteine. This Listeria welshimeri serovar 6b (strain ATCC 35897 / DSM 20650 / CCUG 15529 / CIP 8149 / NCTC 11857 / SLCC 5334 / V8) protein is Glutathione biosynthesis bifunctional protein GshAB.